We begin with the raw amino-acid sequence, 532 residues long: CTP synthase (532 aa).

The interval 1–268 (MTTKYIFVTG…DEIVCDHLNL (268 aa)) is amidoligase domain. Ser-14 serves as a coordination point for CTP. Position 14 (Ser-14) interacts with UTP. 15-20 (SLGKGI) serves as a coordination point for ATP. Tyr-55 is a binding site for L-glutamine. An ATP-binding site is contributed by Asp-72. The Mg(2+) site is built by Asp-72 and Glu-142. Residues 149–151 (DIE), 189–194 (KSKPTQ), and Lys-225 contribute to the CTP site. Residues 189 to 194 (KSKPTQ) and Lys-225 contribute to the UTP site. 241-243 (RDA) contributes to the ATP binding site. In terms of domain architecture, Glutamine amidotransferase type-1 spans 293-532 (KIALVGKYVA…REFIQASLRK (240 aa)). Gly-355 serves as a coordination point for L-glutamine. Cys-382 (nucleophile; for glutamine hydrolysis) is an active-site residue. L-glutamine-binding positions include 383 to 386 (LGMQ), Glu-406, and Arg-463. Active-site residues include His-508 and Glu-510.

It belongs to the CTP synthase family. As to quaternary structure, homotetramer.

It carries out the reaction UTP + L-glutamine + ATP + H2O = CTP + L-glutamate + ADP + phosphate + 2 H(+). The catalysed reaction is L-glutamine + H2O = L-glutamate + NH4(+). It catalyses the reaction UTP + NH4(+) + ATP = CTP + ADP + phosphate + 2 H(+). It functions in the pathway pyrimidine metabolism; CTP biosynthesis via de novo pathway; CTP from UDP: step 2/2. Allosterically activated by GTP, when glutamine is the substrate; GTP has no effect on the reaction when ammonia is the substrate. The allosteric effector GTP functions by stabilizing the protein conformation that binds the tetrahedral intermediate(s) formed during glutamine hydrolysis. Inhibited by the product CTP, via allosteric rather than competitive inhibition. In terms of biological role, catalyzes the ATP-dependent amination of UTP to CTP with either L-glutamine or ammonia as the source of nitrogen. Regulates intracellular CTP levels through interactions with the four ribonucleotide triphosphates. The polypeptide is CTP synthase (Halalkalibacterium halodurans (strain ATCC BAA-125 / DSM 18197 / FERM 7344 / JCM 9153 / C-125) (Bacillus halodurans)).